The following is a 122-amino-acid chain: Large ribosomal subunit protein uL14 (122 aa).

Belongs to the universal ribosomal protein uL14 family. As to quaternary structure, part of the 50S ribosomal subunit. Forms a cluster with proteins L3 and L19. In the 70S ribosome, L14 and L19 interact and together make contacts with the 16S rRNA in bridges B5 and B8.

In terms of biological role, binds to 23S rRNA. Forms part of two intersubunit bridges in the 70S ribosome. In Chloroflexus aggregans (strain MD-66 / DSM 9485), this protein is Large ribosomal subunit protein uL14.